The primary structure comprises 414 residues: Glyceraldehyde-3-phosphate dehydrogenase, chloroplastic (414 aa).

The N-terminal 76 residues, 1 to 76 (MAFVAPVATV…GIVAATFGPT (76 aa)), are a transit peptide targeting the chloroplast. NADP(+) is bound by residues 88–89 (RI), D112, and R156. D-glyceraldehyde 3-phosphate contacts are provided by residues 230 to 232 (SCT), T261, R276, 289 to 290 (TG), and R312. The Nucleophile role is filled by C231. Position 394 (N394) interacts with NADP(+).

Belongs to the glyceraldehyde-3-phosphate dehydrogenase family. As to quaternary structure, homotetramer.

It is found in the plastid. Its subcellular location is the chloroplast. The catalysed reaction is D-glyceraldehyde 3-phosphate + phosphate + NADP(+) = (2R)-3-phospho-glyceroyl phosphate + NADPH + H(+). It functions in the pathway carbohydrate biosynthesis; Calvin cycle. The polypeptide is Glyceraldehyde-3-phosphate dehydrogenase, chloroplastic (GAPA) (Chondrus crispus (Carrageen Irish moss)).